A 122-amino-acid chain; its full sequence is UPF0102 protein XAC0764 (122 aa).

The protein belongs to the UPF0102 family.

This chain is UPF0102 protein XAC0764, found in Xanthomonas axonopodis pv. citri (strain 306).